The sequence spans 184 residues: ATP synthase subunit b (184 aa).

Residues 15–34 (VQPGLIFWTLVTFVIAAVVL) traverse the membrane as a helical segment.

This sequence belongs to the ATPase B chain family. As to quaternary structure, F-type ATPases have 2 components, F(1) - the catalytic core - and F(0) - the membrane proton channel. F(1) has five subunits: alpha(3), beta(3), gamma(1), delta(1), epsilon(1). F(0) has three main subunits: a(1), b(2) and c(10-14). The alpha and beta chains form an alternating ring which encloses part of the gamma chain. F(1) is attached to F(0) by a central stalk formed by the gamma and epsilon chains, while a peripheral stalk is formed by the delta and b chains.

The protein resides in the cell inner membrane. In terms of biological role, f(1)F(0) ATP synthase produces ATP from ADP in the presence of a proton or sodium gradient. F-type ATPases consist of two structural domains, F(1) containing the extramembraneous catalytic core and F(0) containing the membrane proton channel, linked together by a central stalk and a peripheral stalk. During catalysis, ATP synthesis in the catalytic domain of F(1) is coupled via a rotary mechanism of the central stalk subunits to proton translocation. Functionally, component of the F(0) channel, it forms part of the peripheral stalk, linking F(1) to F(0). The protein is ATP synthase subunit b of Myxococcus xanthus (strain DK1622).